The primary structure comprises 156 residues: Peptide methionine sulfoxide reductase MsrA (156 aa).

Cys-10 is an active-site residue.

Belongs to the MsrA Met sulfoxide reductase family.

The enzyme catalyses L-methionyl-[protein] + [thioredoxin]-disulfide + H2O = L-methionyl-(S)-S-oxide-[protein] + [thioredoxin]-dithiol. It carries out the reaction [thioredoxin]-disulfide + L-methionine + H2O = L-methionine (S)-S-oxide + [thioredoxin]-dithiol. Its function is as follows. Has an important function as a repair enzyme for proteins that have been inactivated by oxidation. Catalyzes the reversible oxidation-reduction of methionine sulfoxide in proteins to methionine. The sequence is that of Peptide methionine sulfoxide reductase MsrA from Metamycoplasma arthritidis (strain 158L3-1) (Mycoplasma arthritidis).